Here is a 272-residue protein sequence, read N- to C-terminus: Methyl-CpG-binding domain-containing protein 2 (272 aa).

Polar residues predominate over residues Met-1 to Pro-15. Positions Met-1–Leu-24 are disordered. The CW-type zinc-finger motif lies at Cys-53–Gln-112. Residues Gln-62–Cys-104 carry the MBD-associated domain (MAD) motif. Residues Cys-63, Cys-66, Cys-92, and Cys-104 each coordinate Zn(2+). In terms of domain architecture, MBD spans Trp-118–Pro-192. Over residues Leu-236–Gln-250 the composition is skewed to polar residues. Residues Leu-236 to Arg-272 are disordered.

As to quaternary structure, interacts (via MBD domain) with DDM1. Expressed in buds, flowers, stems, siliques and mature seeds.

It localises to the nucleus. Functionally, probable transcriptional regulator. This Arabidopsis thaliana (Mouse-ear cress) protein is Methyl-CpG-binding domain-containing protein 2 (MBD2).